A 356-amino-acid chain; its full sequence is Rhomboid-related protein 1 (356 aa).

7 consecutive transmembrane segments (helical) span residues 107-129 (WCPP…FFYW), 172-194 (YMFL…LVGI), 201-223 (KIWR…QYAI), 227-249 (SLLV…NVIL), 256-275 (LRWI…FGGA), 290-312 (HLAH…YNVV), and 319-341 (IIRY…FVIV). Catalysis depends on S233, which acts as the Nucleophile. H293 is a catalytic residue.

This sequence belongs to the peptidase S54 family.

It localises to the membrane. The catalysed reaction is Cleaves type-1 transmembrane domains using a catalytic dyad composed of serine and histidine that are contributed by different transmembrane domains.. Its function is as follows. Serine protease which activates lin-3 isoform a in the proximal vulva precursor cells (VPC) during vulva development to transmit the inductive anchor cell signal to the distal VPCs. This is Rhomboid-related protein 1 from Caenorhabditis elegans.